A 42-amino-acid chain; its full sequence is Large ribosomal subunit protein bL36 (42 aa).

This sequence belongs to the bacterial ribosomal protein bL36 family.

This is Large ribosomal subunit protein bL36 from Ehrlichia canis (strain Jake).